Consider the following 524-residue polypeptide: Decreased expression in renal and prostate cancer protein (524 aa).

Basic and acidic residues predominate over residues 1–12 (MKEPRIFPRERP). 2 disordered regions span residues 1–43 (MKEP…TGHP) and 64–252 (PFPR…LDAR). The segment covering 129-148 (LNPRTGALPGPGPLSNPRLG) has biased composition (low complexity). Residues 163–181 (GLLGAGPDPRGGGPMGPGS) are compositionally biased toward gly residues. Ser302 is subject to Phosphoserine. Over residues 312–323 (PMGPNSGPSSRG) the composition is skewed to low complexity. A disordered region spans residues 312 to 332 (PMGPNSGPSSRGIGLPGPNPS). Arg364 carries the asymmetric dimethylarginine modification. Residue Arg387 is modified to Omega-N-methylarginine. Ser423 bears the Phosphoserine mark.

Belongs to the DERPC family. As to expression, ubiquitously expressed, with abundant expression in kidney, skeletal muscle, testis, liver, ovary, and heart and moderate expression in prostate. Expression is significantly reduced in renal and prostate tumors. No differential expression in breast cancer cells, between lobular carcinoma and normal lobules.

Its subcellular location is the nucleus. Potential tumor suppressor. Inhibits prostate tumor cell growth, when overexpressed. This Homo sapiens (Human) protein is Decreased expression in renal and prostate cancer protein.